Reading from the N-terminus, the 113-residue chain is Mediator of RNA polymerase II transcription subunit 11 (113 aa).

The protein belongs to the Mediator complex subunit 11 family. In terms of assembly, component of the Mediator complex.

It localises to the nucleus. In terms of biological role, component of the Mediator complex, a coactivator involved in the regulated transcription of nearly all RNA polymerase II-dependent genes. Mediator functions as a bridge to convey information from gene-specific regulatory proteins to the basal RNA polymerase II transcription machinery. Mediator is recruited to promoters by direct interactions with regulatory proteins and serves as a scaffold for the assembly of a functional pre-initiation complex with RNA polymerase II and the general transcription factors. The protein is Mediator of RNA polymerase II transcription subunit 11 (MED11) of Eremothecium gossypii (strain ATCC 10895 / CBS 109.51 / FGSC 9923 / NRRL Y-1056) (Yeast).